A 55-amino-acid chain; its full sequence is MAKAATIKIKLLSTADTGFFYVTKKNSRTMTDKMSKRKYDPVVKKHVEFKETKIK.

This sequence belongs to the bacterial ribosomal protein bL33 family.

The protein is Large ribosomal subunit protein bL33 of Bartonella henselae (strain ATCC 49882 / DSM 28221 / CCUG 30454 / Houston 1) (Rochalimaea henselae).